A 150-amino-acid chain; its full sequence is Macrodomain Ter protein (150 aa).

The protein belongs to the MatP family. As to quaternary structure, homodimer.

The protein localises to the cytoplasm. In terms of biological role, required for spatial organization of the terminus region of the chromosome (Ter macrodomain) during the cell cycle. Prevents early segregation of duplicated Ter macrodomains during cell division. Binds specifically to matS, which is a 13 bp signature motif repeated within the Ter macrodomain. The protein is Macrodomain Ter protein of Citrobacter koseri (strain ATCC BAA-895 / CDC 4225-83 / SGSC4696).